The sequence spans 271 residues: Formamidopyrimidine-DNA glycosylase (271 aa).

Residue Pro-2 is the Schiff-base intermediate with DNA of the active site. The active-site Proton donor is Glu-3. The active-site Proton donor; for beta-elimination activity is Lys-56. His-89, Arg-107, and Arg-151 together coordinate DNA. The FPG-type zinc finger occupies 236-270 (MVYDRAGLPCRVCAAPIKSIRQGQRSSFYCATCQK). The active-site Proton donor; for delta-elimination activity is Arg-260.

This sequence belongs to the FPG family. In terms of assembly, monomer. Zn(2+) is required as a cofactor.

It catalyses the reaction Hydrolysis of DNA containing ring-opened 7-methylguanine residues, releasing 2,6-diamino-4-hydroxy-5-(N-methyl)formamidopyrimidine.. The enzyme catalyses 2'-deoxyribonucleotide-(2'-deoxyribose 5'-phosphate)-2'-deoxyribonucleotide-DNA = a 3'-end 2'-deoxyribonucleotide-(2,3-dehydro-2,3-deoxyribose 5'-phosphate)-DNA + a 5'-end 5'-phospho-2'-deoxyribonucleoside-DNA + H(+). In terms of biological role, involved in base excision repair of DNA damaged by oxidation or by mutagenic agents. Acts as a DNA glycosylase that recognizes and removes damaged bases. Has a preference for oxidized purines, such as 7,8-dihydro-8-oxoguanine (8-oxoG). Has AP (apurinic/apyrimidinic) lyase activity and introduces nicks in the DNA strand. Cleaves the DNA backbone by beta-delta elimination to generate a single-strand break at the site of the removed base with both 3'- and 5'-phosphates. This chain is Formamidopyrimidine-DNA glycosylase, found in Polaromonas naphthalenivorans (strain CJ2).